The chain runs to 302 residues: Endochitinase 2 (302 aa).

Residues 1-42 (EQCGRQAGGALCPGGLCCSQFGWCGSTADYCTVPGCQSQCSG) enclose the Chitin-binding type-1 domain. Disulfide bonds link Cys3-Cys18, Cys12-Cys24, Cys17-Cys31, Cys36-Cys40, Cys73-Cys136, Cys148-Cys156, and Cys255-Cys287. Residue Glu117 is the Proton donor of the active site. The propeptide at 296–302 (GVSVDSM) is removed in mature form.

The protein belongs to the glycosyl hydrolase 19 family. Chitinase class I subfamily.

It carries out the reaction Random endo-hydrolysis of N-acetyl-beta-D-glucosaminide (1-&gt;4)-beta-linkages in chitin and chitodextrins.. In terms of biological role, defense against chitin-containing fungal pathogens. This Gossypium hirsutum (Upland cotton) protein is Endochitinase 2.